Consider the following 314-residue polypeptide: BTB/POZ domain-containing protein KCTD17 (314 aa).

Positions 24 to 94 (KWVRLNVGGT…LRHGKLVLDK (71 aa)) constitute a BTB domain. The interval 190 to 268 (STPNGLSSES…PAGGSRPHPL (79 aa)) is disordered. Residues 196 to 239 (SSESSRKTKSTEEQLEEQQQQEEEVEEVEVEQVQVEADAQEKAQ) are a coiled coil. The segment covering 208 to 225 (EQLEEQQQQEEEVEEVEV) has biased composition (acidic residues).

In terms of assembly, homopentamer; forms a closed pentamer. Interacts with CUL3; interaction is direct and forms a 5:5 heterodecamer. Interacts with TCHP. Interacts with CUL3, as part of the BCR(KCTD17) E3 ubiquitin ligase complex, at least composed of CUL3, KCTD17 and RBX1. As to expression, highly expressed in brain. Highest expression is observed in the putamen and the thalamus.

The protein localises to the cytoplasm. Its function is as follows. Substrate-adapter for CUL3-RING ubiquitin ligase complexes which mediates the ubiquitination and subsequent proteasomal degradation of TCHP, a protein involved in ciliogenesis down-regulation. Thereby, positively regulates ciliogenesis, playing a crucial role in the initial steps of axoneme extension. May also play a role in endoplasmic reticulum calcium ion homeostasis. In Homo sapiens (Human), this protein is BTB/POZ domain-containing protein KCTD17.